Consider the following 150-residue polypeptide: Small ribosomal subunit protein uS11y (150 aa).

The tract at residues 129–150 (EDVTPVPTDSTRRKGGRRGRRL) is disordered. Residues 141-150 (RKGGRRGRRL) show a composition bias toward basic residues.

This sequence belongs to the universal ribosomal protein uS11 family.

This is Small ribosomal subunit protein uS11y from Zea mays (Maize).